Consider the following 486-residue polypeptide: MAALSFSPSPPPKENPKENPNPGIKTTLKPFGKITVHNVLSESGANALQQHIANQNTIIRKIRDFGMLGAVQSAAASTTNTTPISSQRKRPLGESQKQNRHNQQNQQLSKTSVPAKKCKTNKKLAVERPPKAGTISHPHKSQSDQSFGTPGRKGLPLPQAVARRNARERNRVKQVNNGFALLREKIPEEVSEAFEAQGAGRGASKKLSKVETLRMAVEYIRSLEKLLGFDFPPLNSQGNSSGSGDDSFMFIKDEFDCLDEHFDDSLSNYEMDEQQTVQQTLSEDMLNPPQASDLLPSLTTLNGLQYIRIPGTNTYQLLTTDLLGDLSHEQKLEETAASGQLSRSPVPQKVVRSPCSSPVSPVASTELLLQTQTCATPLQQQVIKQEYVSTNISSSSNAQTSPQQQQQVQNLGSSPILPAFYDQEPVSFYDNVVLPGFKKEFSDILQQDQPNNTTAGCLSDESMIDAIDWWEAHAPKSNGACTNLSV.

2 disordered regions span residues 1 to 26 (MAAL…GIKT) and 75 to 158 (AAST…LPLP). Polar residues predominate over residues 75–86 (AASTTNTTPISS). Positions 159-223 (QAVARRNARE…RMAVEYIRSL (65 aa)) constitute a bHLH domain.

In terms of assembly, efficient DNA binding requires dimerization with another bHLH protein. As to expression, l(1)SC, SC and AC strongly label the presumptive stomatogastric nervous system, while ASE is more prominent in the presumptive procephalic lobe.

In terms of biological role, involved in the determination of the neuronal precursors of optic lobes in the central nervous system. The sequence is that of Achaete-scute complex protein T8 (ase) from Drosophila melanogaster (Fruit fly).